Here is a 169-residue protein sequence, read N- to C-terminus: Positive control factor (169 aa).

Positions Y132–M157 form a DNA-binding region, H-T-H motif.

In terms of biological role, positive regulatory protein that acts at the late promoter PL. The polypeptide is Positive control factor (xpf) (Bacillus subtilis (strain 168)).